We begin with the raw amino-acid sequence, 464 residues long: Argininosuccinate lyase (464 aa).

It belongs to the lyase 1 family. Argininosuccinate lyase subfamily.

The protein localises to the cytoplasm. The catalysed reaction is 2-(N(omega)-L-arginino)succinate = fumarate + L-arginine. The protein operates within amino-acid biosynthesis; L-arginine biosynthesis; L-arginine from L-ornithine and carbamoyl phosphate: step 3/3. The protein is Argininosuccinate lyase of Pseudomonas fluorescens (strain ATCC BAA-477 / NRRL B-23932 / Pf-5).